Reading from the N-terminus, the 377-residue chain is Nitric oxide reductase FlRd-NAD(+) reductase (377 aa).

Belongs to the FAD-dependent oxidoreductase family. FAD is required as a cofactor.

It is found in the cytoplasm. It catalyses the reaction 2 reduced [nitric oxide reductase rubredoxin domain] + NAD(+) + H(+) = 2 oxidized [nitric oxide reductase rubredoxin domain] + NADH. It functions in the pathway nitrogen metabolism; nitric oxide reduction. Functionally, one of at least two accessory proteins for anaerobic nitric oxide (NO) reductase. Reduces the rubredoxin moiety of NO reductase. This chain is Nitric oxide reductase FlRd-NAD(+) reductase, found in Salmonella dublin (strain CT_02021853).